Consider the following 172-residue polypeptide: Large ribosomal subunit protein uL5 (172 aa).

It belongs to the universal ribosomal protein uL5 family. As to quaternary structure, component of the large ribosomal subunit.

Its subcellular location is the nucleus. The protein localises to the cytoplasm. Component of the ribosome, a large ribonucleoprotein complex responsible for the synthesis of proteins in the cell. The small ribosomal subunit (SSU) binds messenger RNAs (mRNAs) and translates the encoded message by selecting cognate aminoacyl-transfer RNA (tRNA) molecules. The large subunit (LSU) contains the ribosomal catalytic site termed the peptidyl transferase center (PTC), which catalyzes the formation of peptide bonds, thereby polymerizing the amino acids delivered by tRNAs into a polypeptide chain. The nascent polypeptides leave the ribosome through a tunnel in the LSU and interact with protein factors that function in enzymatic processing, targeting, and the membrane insertion of nascent chains at the exit of the ribosomal tunnel. The polypeptide is Large ribosomal subunit protein uL5 (RPL11) (Tetrahymena thermophila).